Here is a 258-residue protein sequence, read N- to C-terminus: Acyl-[acyl-carrier-protein]--UDP-N-acetylglucosamine O-acyltransferase (258 aa).

It belongs to the transferase hexapeptide repeat family. LpxA subfamily. Homotrimer.

It localises to the cytoplasm. It catalyses the reaction a (3R)-hydroxyacyl-[ACP] + UDP-N-acetyl-alpha-D-glucosamine = a UDP-3-O-[(3R)-3-hydroxyacyl]-N-acetyl-alpha-D-glucosamine + holo-[ACP]. Its pathway is glycolipid biosynthesis; lipid IV(A) biosynthesis; lipid IV(A) from (3R)-3-hydroxytetradecanoyl-[acyl-carrier-protein] and UDP-N-acetyl-alpha-D-glucosamine: step 1/6. In terms of biological role, involved in the biosynthesis of lipid A, a phosphorylated glycolipid that anchors the lipopolysaccharide to the outer membrane of the cell. The chain is Acyl-[acyl-carrier-protein]--UDP-N-acetylglucosamine O-acyltransferase from Pseudomonas syringae pv. tomato (strain ATCC BAA-871 / DC3000).